The primary structure comprises 329 residues: Telomeric repeat-binding factor 2-interacting protein 1 (329 aa).

The BRCT domain occupies 63 to 86 (AVSTDYVVACVESQRRLPLDLYRH). One can recognise a Myb-like domain in the interval 94 to 153 (ASPRGRLPFTEAEDAALLRAVRERSGAPRVSGTALWKELECTGLTRHSWQAMRDRYLRHL). The segment at 179–206 (EFESSESGSDTSDTPDELPLQNGEGTFP) is disordered. The Nuclear localization signal signature appears at 313–329 (AKFGAENVARRVAFRKS).

Belongs to the RAP1 family. In terms of assembly, homodimer. Component of the shelterin complex (telosome). Interacts with terf2; the interaction is direct.

It localises to the nucleus. The protein resides in the chromosome. The protein localises to the telomere. In terms of biological role, acts both as a regulator of telomere function and as a transcription regulator. Involved in the regulation of telomere length and protection as a component of the shelterin complex (telosome). Does not bind DNA directly: recruited to telomeric double-stranded 5'-TTAGGG-3' repeats via its interaction with terf2. Independently of its function in telomeres, also acts as a transcription regulator: recruited to extratelomeric 5'-TTAGGG-3' sites via its association with terf2 or other factors, and regulates gene expression. The sequence is that of Telomeric repeat-binding factor 2-interacting protein 1 (TERF2IP) from Gallus gallus (Chicken).